The primary structure comprises 122 residues: Small ribosomal subunit protein uS13 (122 aa).

Positions 93–122 (RRGLPVRGQRTKTNARTRKGPKKTIAGKKK) are disordered.

Belongs to the universal ribosomal protein uS13 family. As to quaternary structure, part of the 30S ribosomal subunit. Forms a loose heterodimer with protein S19. Forms two bridges to the 50S subunit in the 70S ribosome.

Located at the top of the head of the 30S subunit, it contacts several helices of the 16S rRNA. In the 70S ribosome it contacts the 23S rRNA (bridge B1a) and protein L5 of the 50S subunit (bridge B1b), connecting the 2 subunits; these bridges are implicated in subunit movement. Contacts the tRNAs in the A and P-sites. The sequence is that of Small ribosomal subunit protein uS13 from Corynebacterium jeikeium (strain K411).